Reading from the N-terminus, the 695-residue chain is Threonine--tRNA ligase 1, cytoplasmic (695 aa).

Residues 1 to 21 are disordered; the sequence is MSEEKASSPSGKMDGEKPLNP. A TGS domain is found at 51 to 115; the sequence is DSKPIKVTLP…ETDCTLELLK (65 aa). Residue Lys215 is modified to N6-acetyllysine. A Phosphothreonine modification is found at Thr218. The residue at position 270 (Tyr270) is a Phosphotyrosine. Thr425 carries the phosphothreonine modification.

It belongs to the class-II aminoacyl-tRNA synthetase family. In terms of assembly, homodimer. Post-translationally, ISGylated.

The protein localises to the cytoplasm. The enzyme catalyses tRNA(Thr) + L-threonine + ATP = L-threonyl-tRNA(Thr) + AMP + diphosphate + H(+). Functionally, catalyzes the attachment of threonine to tRNA(Thr) in a two-step reaction: threonine is first activated by ATP to form Thr-AMP and then transferred to the acceptor end of tRNA(Thr). Also edits incorrectly charged tRNA(Thr) via its editing domain, at the post-transfer stage. This chain is Threonine--tRNA ligase 1, cytoplasmic (Tars1), found in Rattus norvegicus (Rat).